A 327-amino-acid chain; its full sequence is Protein UL95 homolog (327 aa).

Belongs to the herpesviridae UL95 family. As to quaternary structure, interacts with ORF24; this interaction may serve as a core scaffold for the assembly of the viral transcription initiation complex. Interacts with ORF66. Interacts with ORF18. Interacts with ORF23. Interacts with ORF31. Interacts with host EPAS1; this interaction stabilizes host EPAS1, ensuring its transcriptional activity.

It localises to the host nucleus. Its function is as follows. Participates in the expression of late viral mRNAs in part by interacting with ORF24. Expressed before viral DNA replication, assembles at the viral pre-replication complexes (pre-RCs) and thus serves as a hub for recruiting a viral transcription complex to ORF24 to promote late viral gene expression. Also plays a regulatory role in the viral life cycle by regulating host transcriptional regulators HIF1A and EPAS1. This chain is Protein UL95 homolog (ORF34), found in Homo sapiens (Human).